A 546-amino-acid polypeptide reads, in one-letter code: Metal transporter Nramp6.2 (546 aa).

8 helical membrane-spanning segments follow: residues 50–70, 83–103, 128–150, 154–176, 187–207, 233–253, 270–290, and 333–353; these read FLPY…PGNL, ELLW…SLAA, SLWL…GTAF, ILFH…LLLG, LLIS…LSYV, IALL…ALVL, YFLI…VSII, and IYAI…TYAG. Residue Asn-371 is glycosylated (N-linked (GlcNAc...) asparagine). 4 helical membrane passes run 374-394, 397-417, 433-453, and 473-493; these read TRCI…SSGA, LIII…IPLL, IYII…NVYY, and VIIG…IIYL.

This sequence belongs to the NRAMP (TC 2.A.55) family.

It localises to the membrane. Probable divalent metal transporter. The protein is Metal transporter Nramp6.2 of Populus trichocarpa (Western balsam poplar).